A 1032-amino-acid chain; its full sequence is Structural polyprotein (1032 aa).

D23 contributes to the a divalent metal cation binding site. One can recognise a Peptidase S50 domain in the interval 501–723; it reads ADSPLGEEHW…QTLPHWTAGS (223 aa). Residue S627 is the Nucleophile of the active site. K670 is an active-site residue. Residues 986 to 1014 are disordered; sequence LVNQPATAPRVPPRRIVSAQTAQTDPPGR. The tract at residues 1021-1030 is interaction with VP1 protein; sequence LRRVRGEDND.

In terms of assembly, homotrimer. A central divalent metal stabilizes the VP2 trimer. As to quaternary structure, homodimer. Interacts (via C-terminus) with VP1 in the cytoplasm. Capsid VP3 interacts with VP2. Post-translationally, specific enzymatic cleavages yield mature proteins. The capsid assembly seems to be regulated by polyprotein processing. The protease VP4 cleaves itself off the polyprotein, thus releasing pre-VP2 and VP3 within the infected cell. During capsid assembly, the C-terminus of pre-VP2 is further processed by VP4, giving rise to VP2, the external capsid protein and three small peptides that all stay closely associated with the capsid.

It localises to the virion. Its subcellular location is the host cytoplasm. In terms of biological role, capsid protein VP2 self assembles to form an icosahedral capsid with a T=13 symmetry, about 70 nm in diameter, and consisting of 260 VP2 trimers. The capsid encapsulates the genomic dsRNA. VP2 is also involved in attachment and entry into the host cell. Functionally, the precursor of VP2 plays an important role in capsid assembly. First, pre-VP2 and VP2 oligomers assemble to form a procapsid. Then, the pre-VP2 intermediates may be processed into VP2 proteins by proteolytic cleavage mediated by VP4 to obtain the mature virion. The final capsid is composed of pentamers and hexamers but VP2 has a natural tendency to assemble into all-pentameric structures. Therefore pre-VP2 may be required to allow formation of the hexameric structures. Its function is as follows. Protease VP4 is a serine protease that cleaves the polyprotein into its final products. Pre-VP2 is first partially cleaved, and may be completely processed by VP4 upon capsid maturation. Capsid protein VP3 plays a key role in virion assembly by providing a scaffold for the capsid made of VP2. May self-assemble to form a T=4-like icosahedral inner-capsid composed of at least 180 trimers. Plays a role in genomic RNA packaging by recruiting VP1 into the capsid and interacting with the dsRNA genome segments to form a ribonucleoprotein complex. Additionally, the interaction of the VP3 C-terminal tail with VP1 removes the inherent structural blockade of the polymerase active site. Thus, VP3 can also function as a transcriptional activator. In terms of biological role, structural peptide 1 is a small peptide derived from pre-VP2 C-terminus. It destabilizes and perforates cell membranes, suggesting a role during entry. Functionally, structural peptide 2 is a small peptide derived from pre-VP2 C-terminus. It is not essential for the virus viability, but viral growth is affected when missing. Its function is as follows. Structural peptide 3 is a small peptide derived from pre-VP2 C-terminus. It is not essential for the virus viability, but viral growth is affected when missing. The polypeptide is Structural polyprotein (Drosophila melanogaster (Fruit fly)).